The sequence spans 226 residues: Leucyl/phenylalanyl-tRNA--protein transferase (226 aa).

It belongs to the L/F-transferase family.

Its subcellular location is the cytoplasm. It carries out the reaction N-terminal L-lysyl-[protein] + L-leucyl-tRNA(Leu) = N-terminal L-leucyl-L-lysyl-[protein] + tRNA(Leu) + H(+). The enzyme catalyses N-terminal L-arginyl-[protein] + L-leucyl-tRNA(Leu) = N-terminal L-leucyl-L-arginyl-[protein] + tRNA(Leu) + H(+). The catalysed reaction is L-phenylalanyl-tRNA(Phe) + an N-terminal L-alpha-aminoacyl-[protein] = an N-terminal L-phenylalanyl-L-alpha-aminoacyl-[protein] + tRNA(Phe). Functionally, functions in the N-end rule pathway of protein degradation where it conjugates Leu, Phe and, less efficiently, Met from aminoacyl-tRNAs to the N-termini of proteins containing an N-terminal arginine or lysine. In Pseudomonas paraeruginosa (strain DSM 24068 / PA7) (Pseudomonas aeruginosa (strain PA7)), this protein is Leucyl/phenylalanyl-tRNA--protein transferase.